The following is a 93-amino-acid chain: MADITDIKTILYTEKTLGLQEQGVVVIQTSPKMTKNGLKEVLREYFGVTPLRVNSLRMDGKVKRFKGRVGVRNDFKKFYVKLPDGVSLENGEA.

Belongs to the universal ribosomal protein uL23 family. In terms of assembly, part of the 50S ribosomal subunit. Contacts protein L29, and trigger factor when it is bound to the ribosome.

In terms of biological role, one of the early assembly proteins it binds 23S rRNA. One of the proteins that surrounds the polypeptide exit tunnel on the outside of the ribosome. Forms the main docking site for trigger factor binding to the ribosome. The sequence is that of Large ribosomal subunit protein uL23 from Campylobacter fetus subsp. fetus (strain 82-40).